Reading from the N-terminus, the 315-residue chain is Ester hydrolase C11orf54 homolog (315 aa).

His266, His268, and His278 together coordinate Zn(2+).

In terms of assembly, monomer. Zn(2+) serves as cofactor.

The protein localises to the nucleus. It is found in the cytoplasm. Functionally, exhibits ester hydrolase activity on the substrate p-nitrophenyl acetate, in vitro. Regulates DNA damage and repair by regulating HIF1A degradation via chaperone-mediated autophagy (CMA). This is Ester hydrolase C11orf54 homolog from Rattus norvegicus (Rat).